The primary structure comprises 90 residues: MAMKSVSTLAVFAILFLVIVEMPEIKAQGSKCLKEYGGNVGFSYCAPRIFPSFCYRNCRKNKGAKGGRCRSGGAGAGSMICLCDYCSDKP.

A signal peptide spans 1-27 (MAMKSVSTLAVFAILFLVIVEMPEIKA). Cystine bridges form between cysteine 32-cysteine 86, cysteine 45-cysteine 69, cysteine 54-cysteine 81, and cysteine 58-cysteine 83.

This sequence belongs to the DEFL family. Protease inhibitor I18 (RTI/MTI-2) subfamily.

It localises to the secreted. This is Defensin-like protein 193 (ATTI2) from Arabidopsis thaliana (Mouse-ear cress).